We begin with the raw amino-acid sequence, 91 residues long: Protein sigN139 (91 aa).

N-linked (GlcNAc...) asparagine glycans are attached at residues N23 and N34. Residues 46 to 68 form a helical membrane-spanning segment; it reads LLPVVAFISGTVTSITGLVAGAL.

The protein localises to the membrane. This is Protein sigN139 from Dictyostelium discoideum (Social amoeba).